The sequence spans 306 residues: Epoxyqueuosine reductase (306 aa).

Asp131 (proton donor) is an active-site residue. Residues 173 to 205 (LDLTYDHPVTDHCGTCTACIDACPTQAIVQPYV) enclose the 4Fe-4S ferredoxin-type domain. 8 residues coordinate [4Fe-4S] cluster: Cys185, Cys188, Cys191, Cys195, Cys211, Cys238, Cys241, and Cys245.

This sequence belongs to the QueG family. As to quaternary structure, monomer. Requires cob(II)alamin as cofactor. [4Fe-4S] cluster serves as cofactor.

Its subcellular location is the cytoplasm. The enzyme catalyses epoxyqueuosine(34) in tRNA + AH2 = queuosine(34) in tRNA + A + H2O. Its pathway is tRNA modification; tRNA-queuosine biosynthesis. Its function is as follows. Catalyzes the conversion of epoxyqueuosine (oQ) to queuosine (Q), which is a hypermodified base found in the wobble positions of tRNA(Asp), tRNA(Asn), tRNA(His) and tRNA(Tyr). The sequence is that of Epoxyqueuosine reductase from Cellulophaga algicola (strain DSM 14237 / IC166 / ACAM 630).